The sequence spans 207 residues: uncharacterized protein (207 aa).

Residues Gly-51 and Asp-72 each coordinate S-adenosyl-L-methionine.

This sequence belongs to the methyltransferase superfamily. YrrT family.

Could be a S-adenosyl-L-methionine-dependent methyltransferase. This is an uncharacterized protein from Staphylococcus carnosus (strain TM300).